We begin with the raw amino-acid sequence, 321 residues long: Ribosomal RNA small subunit methyltransferase H (321 aa).

Residues Gly44–His46, Asp64, Phe88, Asp109, and Gln116 each bind S-adenosyl-L-methionine.

It belongs to the methyltransferase superfamily. RsmH family.

It localises to the cytoplasm. The enzyme catalyses cytidine(1402) in 16S rRNA + S-adenosyl-L-methionine = N(4)-methylcytidine(1402) in 16S rRNA + S-adenosyl-L-homocysteine + H(+). In terms of biological role, specifically methylates the N4 position of cytidine in position 1402 (C1402) of 16S rRNA. This Methylobacillus flagellatus (strain ATCC 51484 / DSM 6875 / VKM B-1610 / KT) protein is Ribosomal RNA small subunit methyltransferase H.